The chain runs to 193 residues: Orotate phosphoribosyltransferase (193 aa).

5-phospho-alpha-D-ribose 1-diphosphate contacts are provided by residues Arg-102, Lys-103, Lys-106, His-108, and 129 to 137 (EDVVTTGGS). Residues Thr-133 and Arg-161 each coordinate orotate.

The protein belongs to the purine/pyrimidine phosphoribosyltransferase family. PyrE subfamily. In terms of assembly, homodimer. It depends on Mg(2+) as a cofactor.

It catalyses the reaction orotidine 5'-phosphate + diphosphate = orotate + 5-phospho-alpha-D-ribose 1-diphosphate. Its pathway is pyrimidine metabolism; UMP biosynthesis via de novo pathway; UMP from orotate: step 1/2. Catalyzes the transfer of a ribosyl phosphate group from 5-phosphoribose 1-diphosphate to orotate, leading to the formation of orotidine monophosphate (OMP). The sequence is that of Orotate phosphoribosyltransferase from Prochlorococcus marinus (strain NATL1A).